Reading from the N-terminus, the 464-residue chain is Properdin (464 aa).

Positions 1–22 are cleaved as a signal peptide; the sequence is MPAEMQAPQWLLLLLVILPATG. 7 TSP type-1 domains span residues 24-72, 73-130, 132-187, 189-251, 253-309, 311-372, and 374-457; these read DPVL…QACR, SPQW…PCCP, MGGW…KTCP, HGAW…PPCP, AGGW…VPCP, NGEW…HNCI, and KGSW…PVCK. 3 disulfides stabilise this stretch: C28-C52, C39-C68, and C53-C71. C-linked (Man) tryptophan glycosylation is found at W79 and W82. Cystine bridges form between C85–C123, C89–C129, C100–C107, C128–C166, C144–C180, C148–C186, and C159–C170. Residues W135, W138, and W141 are each glycosylated (C-linked (Man) tryptophan). T147 carries O-linked (Fuc...) threonine glycosylation. C-linked (Man) tryptophan glycosylation is found at W192, W195, and W198. Intrachain disulfides connect C201–C244, C205–C250, and C220–C234. S204 carries an O-linked (Fuc...) serine glycan. 2 C-linked (Man) tryptophan glycosylation sites follow: W256 and W259. Disulfide bonds link C265–C302, C269–C308, and C280–C292. O-linked (Fuc...) threonine glycosylation occurs at T268. Residues W317 and W320 are each glycosylated (C-linked (Man) tryptophan). Intrachain disulfides connect C323-C365, C332-C371, and C345-C355. The tract at residues 346–354 is interaction with Complement C3 beta chain; sequence GGRKFNGKP. W377, W380, and W383 each carry a C-linked (Man) tryptophan glycan. 3 disulfides stabilise this stretch: C386–C450, C390–C456, and C402–C434. N423 carries an N-linked (GlcNAc...) asparagine glycan.

In terms of assembly, in plasma, properdin exists as dimers, trimers or tetramers in the relative proportions of 26:54:20. Interacts with the pro-C3-convertase enzyme complex (C3b-Bb) comprised of Complement C3 beta chain (C3b) and the Complement factor B Bb fragment (Bb), where it binds (via its TSP type-1 5 domain) with C3b and Bb. This interaction stabilizes the complex and allows it to become the active C3-convertase enzyme complex (C3b-Bb-FP). Interacts with C3b. Interacts with CFB.

It is found in the secreted. Its function is as follows. A positive regulator of the alternate pathway of complement. It binds to and stabilizes the C3- and C5-convertase enzyme complexes. Inhibits CFI-CFH mediated degradation of Inhibits CFI-CFH mediated degradation of Complement C3 beta chain (C3b). This is Properdin (Cfp) from Mus musculus (Mouse).